The chain runs to 300 residues: Urease accessory protein UreD (300 aa).

It belongs to the UreD family. UreD, UreF and UreG form a complex that acts as a GTP-hydrolysis-dependent molecular chaperone, activating the urease apoprotein by helping to assemble the nickel containing metallocenter of UreC. The UreE protein probably delivers the nickel.

The protein localises to the cytoplasm. Required for maturation of urease via the functional incorporation of the urease nickel metallocenter. This Prochlorococcus marinus (strain MIT 9215) protein is Urease accessory protein UreD.